The primary structure comprises 1120 residues: MGFAEKNLYDFRFLLFISIILSCSISASATIAEANALLKWKSTFTNSSKLSSWVHDANTNTSFSCTSWYGVSCNSRGSIEELNLTNTGIEGTFQDFPFISLSNLAYVDLSMNLLSGTIPPQFGNLSKLIYFDLSTNHLTGEISPSLGNLKNLTVLYLHQNYLTSVIPSELGNMESMTDLALSQNKLTGSIPSSLGNLKNLMVLYLYENYLTGVIPPELGNMESMTDLALSQNKLTGSIPSTLGNLKNLMVLYLYENYLTGVIPPEIGNMESMTNLALSQNKLTGSIPSSLGNLKNLTLLSLFQNYLTGGIPPKLGNIESMIDLELSNNKLTGSIPSSLGNLKNLTILYLYENYLTGVIPPELGNMESMIDLQLNNNKLTGSIPSSFGNLKNLTYLYLYLNYLTGVIPQELGNMESMINLDLSQNKLTGSVPDSFGNFTKLESLYLRVNHLSGAIPPGVANSSHLTTLILDTNNFTGFFPETVCKGRKLQNISLDYNHLEGPIPKSLRDCKSLIRARFLGNKFTGDIFEAFGIYPDLNFIDFSHNKFHGEISSNWEKSPKLGALIMSNNNITGAIPTEIWNMTQLVELDLSTNNLFGELPEAIGNLTNLSRLRLNGNQLSGRVPAGLSFLTNLESLDLSSNNFSSEIPQTFDSFLKLHDMNLSRNKFDGSIPRLSKLTQLTQLDLSHNQLDGEIPSQLSSLQSLDKLDLSHNNLSGLIPTTFEGMIALTNVDISNNKLEGPLPDTPTFRKATADALEENIGLCSNIPKQRLKPCRELKKPKKNGNLVVWILVPILGVLVILSICANTFTYCIRKRKLQNGRNTDPETGENMSIFSVDGKFKYQDIIESTNEFDPTHLIGTGGYSKVYRANLQDTIIAVKRLHDTIDEEISKPVVKQEFLNEVKALTEIRHRNVVKLFGFCSHRRHTFLIYEYMEKGSLNKLLANDEEAKRLTWTKRINVVKGVAHALSYMHHDRITPIVHRDISSGNILLDNDYTAKISDFGTAKLLKTDSSNWSAVAGTYGYVAPEFAYTMKVTEKCDVYSFGVLILELIIGKHPGDLVSSLSSSPGEALSLRSISDERVLEPRGQNREKLLKMVEMALLCLQANPESRPTMLSISTTFS.

The first 29 residues, 1-29 (MGFAEKNLYDFRFLLFISIILSCSISASA), serve as a signal peptide directing secretion. At 30 to 783 (TIAEANALLK…RELKKPKKNG (754 aa)) the chain is on the extracellular side. Asn-46, Asn-60, Asn-83, and Asn-124 each carry an N-linked (GlcNAc...) asparagine glycan. 27 LRR repeats span residues 78–100 (SIEE…PFIS), 103–125 (NLAY…FGNL), 127–150 (KLIY…GNLK), 151–172 (NLTV…ELGN), 175–198 (SMTD…GNLK), 199–221 (NLMV…LGNM), 223–246 (SMTD…GNLK), 247–269 (NLMV…IGNM), 271–294 (SMTN…GNLK), 295–317 (NLTL…LGNI), 319–342 (SMID…GNLK), 343–365 (NLTI…LGNM), 367–389 (SMID…FGNL), 391–412 (NLTY…ELGN), 415–437 (SMIN…FGNF), 439–461 (KLES…VANS), 463–484 (HLTT…TVCK), 487–510 (KLQN…RDCK), 535–557 (DLNF…WEKS), 559–581 (KLGA…IWNM), 583–605 (QLVE…IGNL), 607–630 (NLSR…SFLT), 631–652 (NLES…TFDS), 655–677 (KLHD…SKLT), 678–701 (QLTQ…SSLQ), 702–723 (SLDK…TFEG), and 726–748 (ALTN…PTFR). N-linked (GlcNAc...) asparagine glycosylation occurs at Asn-151. Asn-295 carries an N-linked (GlcNAc...) asparagine glycan. Asn-343 carries an N-linked (GlcNAc...) asparagine glycan. 5 N-linked (GlcNAc...) asparagine glycosylation sites follow: Asn-391, Asn-436, Asn-460, Asn-473, and Asn-490. N-linked (GlcNAc...) asparagine glycans are attached at residues Asn-569, Asn-580, Asn-604, Asn-607, Asn-641, and Asn-660. The N-linked (GlcNAc...) asparagine glycan is linked to Asn-712. Residues 784-804 (NLVVWILVPILGVLVILSICA) form a helical membrane-spanning segment. Topologically, residues 805–1120 (NTFTYCIRKR…TMLSISTTFS (316 aa)) are cytoplasmic. Thr-848 is subject to Phosphothreonine. One can recognise a Protein kinase domain in the interval 851–1120 (FDPTHLIGTG…TMLSISTTFS (270 aa)). ATP contacts are provided by residues 857–865 (IGTGGYSKV) and Lys-878. A phosphotyrosine mark is found at Tyr-929 and Tyr-968. The Proton acceptor role is filled by Asp-981. Ser-1014 is modified (phosphoserine). Residues Tyr-1022 and Tyr-1029 each carry the phosphotyrosine modification. Thr-1030 is subject to Phosphothreonine.

This sequence belongs to the protein kinase superfamily. Ser/Thr protein kinase family.

It is found in the membrane. The catalysed reaction is L-seryl-[protein] + ATP = O-phospho-L-seryl-[protein] + ADP + H(+). It catalyses the reaction L-threonyl-[protein] + ATP = O-phospho-L-threonyl-[protein] + ADP + H(+). This is Probable leucine-rich repeat receptor-like protein kinase At1g35710 from Arabidopsis thaliana (Mouse-ear cress).